Consider the following 247-residue polypeptide: MRPDLIALQERLQHVFSDPGLLERATTHRSFSAEHNERLEFLGDSVLNLAVSSLLYQRLSALPEGELSRVRANLVRQESLYQLALRLPLAQALRLGESLSGNRQRRSRRRCADELQPDEAGSGGLQHPSILADALEALIGAVYLDAGYASAQALVQRLFQDVEISPRMQAAARDAKTALQEWLASRKMKPPQYQVVARVGAAHCPTFEVACGIPALGLTERGSAGSRQAGEQAAAAAMLATLKARNL.

Positions 5-147 (LIALQERLQH…LIGAVYLDAG (143 aa)) constitute an RNase III domain. Residue glutamate 40 coordinates Mg(2+). Aspartate 44 is a catalytic residue. The tract at residues 104–124 (QRRSRRRCADELQPDEAGSGG) is disordered. Mg(2+) is bound by residues aspartate 133 and glutamate 136. Residue glutamate 136 is part of the active site. The region spanning 174–244 (DAKTALQEWL…AAAMLATLKA (71 aa)) is the DRBM domain.

Belongs to the ribonuclease III family. Homodimer. Mg(2+) is required as a cofactor.

The protein resides in the cytoplasm. The catalysed reaction is Endonucleolytic cleavage to 5'-phosphomonoester.. In terms of biological role, digests double-stranded RNA. Involved in the processing of primary rRNA transcript to yield the immediate precursors to the large and small rRNAs (23S and 16S). Processes some mRNAs, and tRNAs when they are encoded in the rRNA operon. Processes pre-crRNA and tracrRNA of type II CRISPR loci if present in the organism. This is Ribonuclease 3 from Verminephrobacter eiseniae (strain EF01-2).